The chain runs to 191 residues: Phosphoheptose isomerase (191 aa).

The SIS domain maps to 37 to 191; it reads ITSSLKQGGK…LILLIEQSLL (155 aa). Residue 52-54 participates in substrate binding; the sequence is NGG. The Zn(2+) site is built by His-61 and Glu-65. Substrate-binding positions include Glu-65, 93 to 94, 119 to 121, Ser-124, and Gln-172; these read ND and STS. Gln-172 and His-180 together coordinate Zn(2+).

It belongs to the SIS family. GmhA subfamily. The cofactor is Zn(2+).

The protein localises to the cytoplasm. It carries out the reaction 2 D-sedoheptulose 7-phosphate = D-glycero-alpha-D-manno-heptose 7-phosphate + D-glycero-beta-D-manno-heptose 7-phosphate. Its pathway is carbohydrate biosynthesis; D-glycero-D-manno-heptose 7-phosphate biosynthesis; D-glycero-alpha-D-manno-heptose 7-phosphate and D-glycero-beta-D-manno-heptose 7-phosphate from sedoheptulose 7-phosphate: step 1/1. In terms of biological role, catalyzes the isomerization of sedoheptulose 7-phosphate in D-glycero-D-manno-heptose 7-phosphate. In Cytophaga hutchinsonii (strain ATCC 33406 / DSM 1761 / CIP 103989 / NBRC 15051 / NCIMB 9469 / D465), this protein is Phosphoheptose isomerase.